Consider the following 340-residue polypeptide: Methionine import ATP-binding protein MetN (340 aa).

The region spanning 2–241 (IRIENLTKIY…PQSSVAKEFI (240 aa)) is the ABC transporter domain. 38–45 (GLSGAGKS) contributes to the ATP binding site.

The protein belongs to the ABC transporter superfamily. Methionine importer (TC 3.A.1.24) family. As to quaternary structure, the complex is composed of two ATP-binding proteins (MetN), two transmembrane proteins (MetI) and a solute-binding protein (MetQ).

The protein resides in the cell membrane. The catalysed reaction is L-methionine(out) + ATP + H2O = L-methionine(in) + ADP + phosphate + H(+). The enzyme catalyses D-methionine(out) + ATP + H2O = D-methionine(in) + ADP + phosphate + H(+). Functionally, part of the ABC transporter complex MetNIQ involved in methionine import. Responsible for energy coupling to the transport system. The chain is Methionine import ATP-binding protein MetN from Desulfitobacterium hafniense (strain Y51).